Here is a 266-residue protein sequence, read N- to C-terminus: Cell division cycle-associated protein 3 (266 aa).

The disordered stretch occupies residues 1-84 (MGSTQSVSGT…TPMKISGPDP (84 aa)). Phosphoserine is present on residues S29 and S31. A compositionally biased stretch (polar residues) spans 32 to 46 (AGIQRTPIQVESSPQ). T37 is subject to Phosphothreonine. Phosphoserine is present on residues S44 and S67. A Phosphothreonine modification is found at T75. The segment at 90–119 (KELSEVLETEASESISSPELALPRETPLFY) is F-box-like. The residue at position 93 (S93) is a Phosphoserine. Disordered stretches follow at residues 120–225 (DLDL…LSEN) and 242–266 (KAGG…LLES). The segment covering 143-156 (LDPKQVFTKEEAKQ) has biased composition (basic and acidic residues). Over residues 157 to 168 (SAETIAASQNSD) the composition is skewed to polar residues. S197 carries the phosphoserine modification. T200 is subject to Phosphothreonine. The span at 203 to 213 (QDDNSPGTLTL) shows a compositional bias: polar residues. The residue at position 207 (S207) is a Phosphoserine. At T210 the chain carries Phosphothreonine. A compositionally biased stretch (basic and acidic residues) spans 250-259 (PNQDHDKENQ). The KEN box signature appears at 256-258 (KEN).

Interacts with SKP1. Part of a SCF (SKP1-cullin-F-box) protein ligase complex. In terms of processing, ubiquitinated and degraded by the APC/C-Cdh1 complex.

It localises to the cytoplasm. The protein localises to the cytosol. Its pathway is protein modification; protein ubiquitination. In terms of biological role, F-box-like protein which is required for entry into mitosis. Acts by participating in E3 ligase complexes that mediate the ubiquitination and degradation of WEE1 kinase at G2/M phase. This chain is Cell division cycle-associated protein 3 (Cdca3), found in Mus musculus (Mouse).